The sequence spans 565 residues: Adenine deaminase 1 (565 aa).

It belongs to the metallo-dependent hydrolases superfamily. Adenine deaminase family. Mn(2+) is required as a cofactor.

It catalyses the reaction adenine + H2O + H(+) = hypoxanthine + NH4(+). The protein is Adenine deaminase 1 of Rhizobium etli (strain ATCC 51251 / DSM 11541 / JCM 21823 / NBRC 15573 / CFN 42).